A 513-amino-acid polypeptide reads, in one-letter code: Na(+)/H(+) antiporter NhaB (513 aa).

12 helical membrane-spanning segments follow: residues 23 to 43 (LALI…PFVA), 52 to 72 (IFTL…LLAI), 97 to 117 (LLLM…LFIF), 120 to 140 (LLLS…AAAF), 144 to 164 (FLDA…FYGI), 202 to 222 (LMMH…VGEP), 238 to 258 (FFLR…LTCL), 303 to 323 (AIIG…VGLI), 348 to 368 (TESL…AVII), 391 to 411 (LFYI…VGTI), 447 to 467 (ATPN…APLI), and 475 to 495 (VWMA…CVEF).

The protein belongs to the NhaB Na(+)/H(+) (TC 2.A.34) antiporter family.

It is found in the cell inner membrane. The enzyme catalyses 2 Na(+)(in) + 3 H(+)(out) = 2 Na(+)(out) + 3 H(+)(in). Its function is as follows. Na(+)/H(+) antiporter that extrudes sodium in exchange for external protons. In Shigella boydii serotype 18 (strain CDC 3083-94 / BS512), this protein is Na(+)/H(+) antiporter NhaB.